Consider the following 91-residue polypeptide: Small ribosomal subunit protein uS19 (91 aa).

Belongs to the universal ribosomal protein uS19 family.

Its function is as follows. Protein S19 forms a complex with S13 that binds strongly to the 16S ribosomal RNA. This chain is Small ribosomal subunit protein uS19, found in Actinobacillus pleuropneumoniae serotype 7 (strain AP76).